Consider the following 445-residue polypeptide: UPF0210 protein SPG_0223 (445 aa).

This sequence belongs to the UPF0210 family. In terms of assembly, homodimer.

The sequence is that of UPF0210 protein SPG_0223 from Streptococcus pneumoniae serotype 19F (strain G54).